The sequence spans 172 residues: Large ribosomal subunit protein uL10 (172 aa).

It belongs to the universal ribosomal protein uL10 family. In terms of assembly, part of the ribosomal stalk of the 50S ribosomal subunit. The N-terminus interacts with L11 and the large rRNA to form the base of the stalk. The C-terminus forms an elongated spine to which 3 L12 dimers bind in a sequential fashion forming a heptameric L10(L12)2(L12)2(L12)2 complex.

Functionally, forms part of the ribosomal stalk, playing a central role in the interaction of the ribosome with GTP-bound translation factors. The protein is Large ribosomal subunit protein uL10 of Agrobacterium fabrum (strain C58 / ATCC 33970) (Agrobacterium tumefaciens (strain C58)).